The primary structure comprises 242 residues: Ubiquinone biosynthesis O-methyltransferase (242 aa).

Arg44, Gly64, Asp85, and Met129 together coordinate S-adenosyl-L-methionine.

The protein belongs to the methyltransferase superfamily. UbiG/COQ3 family.

The catalysed reaction is a 3-demethylubiquinol + S-adenosyl-L-methionine = a ubiquinol + S-adenosyl-L-homocysteine + H(+). It carries out the reaction a 3-(all-trans-polyprenyl)benzene-1,2-diol + S-adenosyl-L-methionine = a 2-methoxy-6-(all-trans-polyprenyl)phenol + S-adenosyl-L-homocysteine + H(+). The protein operates within cofactor biosynthesis; ubiquinone biosynthesis. Functionally, O-methyltransferase that catalyzes the 2 O-methylation steps in the ubiquinone biosynthetic pathway. This is Ubiquinone biosynthesis O-methyltransferase from Salmonella arizonae (strain ATCC BAA-731 / CDC346-86 / RSK2980).